Reading from the N-terminus, the 162-residue chain is Phosphopantetheine adenylyltransferase (162 aa).

Substrate is bound at residue Thr14. ATP contacts are provided by residues 14–15 and His22; that span reads TF. Substrate is bound by residues Lys46, Leu78, and Arg92. Residues 93–95, Glu103, and 128–134 each bind ATP; these read GLR and HSFISSS.

This sequence belongs to the bacterial CoaD family. Homohexamer. The cofactor is Mg(2+).

Its subcellular location is the cytoplasm. It catalyses the reaction (R)-4'-phosphopantetheine + ATP + H(+) = 3'-dephospho-CoA + diphosphate. Its pathway is cofactor biosynthesis; coenzyme A biosynthesis; CoA from (R)-pantothenate: step 4/5. Functionally, reversibly transfers an adenylyl group from ATP to 4'-phosphopantetheine, yielding dephospho-CoA (dPCoA) and pyrophosphate. In Xylella fastidiosa (strain 9a5c), this protein is Phosphopantetheine adenylyltransferase.